The chain runs to 757 residues: MKKSIIAFPRIGSNRELKFALEKYFRKEISEDELQIVAKELRLESWKSQKEAGIDYPISNDFSFYDQTLDLSIALGVIPERYKKLKLNELDTLFALARGFQDEENDVKARPMKKWFNTNYHYIVPEISKETVIKANFSKLLNEYQEAKTAGFETRPTIIGPYTFLILADYLSGVTEDAILSDLIGAYTILFDQLNNLGGEWLQIEEPALVLDQTEEEQQLFIKIYQELLKNKNKLRVLLQTYFGDLRNSYQEIIKLDFDGIGLDFVEGRESVKLVQKYGFPKNKLLFAGVVNGKNIWRNHYQKTLSLLKDLGNIDNIVINTSCSLQHVPVTTENETKLSKEILNHFAFAKEKLVEVSEISEIYVKKNTSLLDKNIALFDKNRVQENIQLKQKIIHLTDKDFIRTPSLVERRADQIKALNLPLLPTTTIGSFPQTPEIRKSRLQYKRGELSKSDYEAFLEEKIKECLELQENIGLDVLVHGEFERNDMVEYFGEQLDGYIFTQKAWVQSYGTRCVKPPIVWGDITRPQAMTVRWSAYAQSQTSKPVKGMLTGPVTILNWSFPREDISLKESTLQLALAVQEEVLDLEKSGVKIIQIDEAALREKLPLRRSDWYSEYLDWAIPAFRLVHSKVKAETQIHTHMCYSEFEDIIPSIDAMDADVISFEASRSQLSIIDALKAHHFQTLVGPGVYDIHSPRIPSSQEIKIQLEKILNKLPIEQVWVNPDCGLKTRGNKETIPSLTHLVEATKEVRKGKITYDK.

Residues 15-18 (RELK) and K114 contribute to the 5-methyltetrahydropteroyltri-L-glutamate site. Residues 428-430 (IGS) and E481 contribute to the L-homocysteine site. Residues 428–430 (IGS) and E481 contribute to the L-methionine site. 5-methyltetrahydropteroyltri-L-glutamate contacts are provided by residues 512 to 513 (RC) and W558. D596 serves as a coordination point for L-homocysteine. D596 serves as a coordination point for L-methionine. Residue E602 participates in 5-methyltetrahydropteroyltri-L-glutamate binding. Positions 639, 641, and 663 each coordinate Zn(2+). H692 acts as the Proton donor in catalysis. C724 serves as a coordination point for Zn(2+).

The protein belongs to the vitamin-B12 independent methionine synthase family. The cofactor is Zn(2+).

It carries out the reaction 5-methyltetrahydropteroyltri-L-glutamate + L-homocysteine = tetrahydropteroyltri-L-glutamate + L-methionine. Its pathway is amino-acid biosynthesis; L-methionine biosynthesis via de novo pathway; L-methionine from L-homocysteine (MetE route): step 1/1. Catalyzes the transfer of a methyl group from 5-methyltetrahydrofolate to homocysteine resulting in methionine formation. The protein is 5-methyltetrahydropteroyltriglutamate--homocysteine methyltransferase of Lactococcus lactis subsp. cremoris (strain MG1363).